A 1104-amino-acid polypeptide reads, in one-letter code: Lon protease homolog, mitochondrial (1104 aa).

A mitochondrion-targeting transit peptide spans 1-54; sequence MLRGQTLRWRAALQTPRSLILRPLFAPGGYNVGPRSVLETSRRFRSLPPSLRTF. Disordered stretches follow at residues 41–192 and 296–317; these read SRRF…KPSV and SLIPPGDSTKSGNSEDKTTEKR. Basic and acidic residues-rich tracts occupy residues 64 to 104 and 125 to 144; these read KPPP…DSSG and KAADRDQRSVTEDAKREAEA. The segment covering 158 to 169 has biased composition (low complexity); that stretch reads SDSSSESKPSGS. Composition is skewed to basic and acidic residues over residues 172-187 and 308-317; these read GGDDGGKKGKKNDKAL and NSEDKTTEKR. One can recognise a Lon N-terminal domain in the interval 199–451; it reads VMAIPIAKRP…KGLVVLKKEL (253 aa). Residue 604-611 participates in ATP binding; it reads GPPGVGKT. Residues 825-839 are compositionally biased toward basic and acidic residues; the sequence is AEGKAAQEESEKETG. Positions 825 to 857 are disordered; the sequence is AEGKAAQEESEKETGPIESTSEQEKATTENPRV. In terms of domain architecture, Lon proteolytic spans 891–1077; it reads TFPPGVTMGL…SEVFDILFAD (187 aa). Residues Ser983 and Lys1026 contribute to the active site.

This sequence belongs to the peptidase S16 family. As to quaternary structure, homohexamer or homoheptamer. Organized in a ring with a central cavity.

The protein localises to the mitochondrion matrix. It carries out the reaction Hydrolysis of proteins in presence of ATP.. Its function is as follows. ATP-dependent serine protease that mediates the selective degradation of misfolded, unassembled or oxidatively damaged polypeptides as well as certain short-lived regulatory proteins in the mitochondrial matrix. May also have a chaperone function in the assembly of inner membrane protein complexes. Participates in the regulation of mitochondrial gene expression and in the maintenance of the integrity of the mitochondrial genome. Binds to mitochondrial DNA in a site-specific manner. The sequence is that of Lon protease homolog, mitochondrial (pim1) from Emericella nidulans (strain FGSC A4 / ATCC 38163 / CBS 112.46 / NRRL 194 / M139) (Aspergillus nidulans).